Consider the following 313-residue polypeptide: tRNA uridine(34) hydroxylase (313 aa).

Residues 124–218 enclose the Rhodanese domain; sequence SDPEVLLIDT…YLEEVPQQES (95 aa). Cys178 (cysteine persulfide intermediate) is an active-site residue.

This sequence belongs to the TrhO family.

The enzyme catalyses uridine(34) in tRNA + AH2 + O2 = 5-hydroxyuridine(34) in tRNA + A + H2O. Its function is as follows. Catalyzes oxygen-dependent 5-hydroxyuridine (ho5U) modification at position 34 in tRNAs. This chain is tRNA uridine(34) hydroxylase, found in Pseudomonas fluorescens (strain ATCC BAA-477 / NRRL B-23932 / Pf-5).